A 404-amino-acid chain; its full sequence is Multidrug resistance protein MdtG (404 aa).

11 helical membrane passes run Leu19–Val39, Leu56–Ala76, Leu90–Ile110, Ala113–Val133, Thr144–Ala164, Pro171–Ile191, Leu222–Leu242, Ile254–Pro274, Ile288–Thr308, Phe317–Asn337, and Ala376–Leu396.

The protein belongs to the major facilitator superfamily. DHA1 family. MdtG (TC 2.A.1.2.20) subfamily.

It is found in the cell inner membrane. This chain is Multidrug resistance protein MdtG, found in Salmonella typhimurium (strain LT2 / SGSC1412 / ATCC 700720).